The chain runs to 132 residues: Acid shock protein (132 aa).

The first 21 residues, 1–21 (MKKVLALVVAAAMGLSSAAFA), serve as a signal peptide directing secretion. Residues 20–45 (FAAETTTSSAAPATATATTTKAAPAK) are compositionally biased toward low complexity. Positions 20 to 132 (FAAETTTSSA…AAKPAAQPAA (113 aa)) are disordered. Residues 22-90 (AETTTSSAAP…TTAPVEQKAQ (69 aa)) constitute a propeptide that is removed on maturation. Residues 62 to 71 (AAKKHHKKAV) are compositionally biased toward basic residues. Low complexity-rich tracts occupy residues 76 to 90 (AAPATTTAPVEQKAQ) and 100 to 109 (AKPAVAQKAQ). Residues 110–119 (AAKKHHKKAV) show a composition bias toward basic residues.

It belongs to the Asr family. Proteolytic processing gives rise to the active protein.

Its subcellular location is the periplasm. In terms of biological role, required for growth and/or survival at acidic conditions. This Enterobacter sp. (strain 638) protein is Acid shock protein.